Reading from the N-terminus, the 362-residue chain is MIIDRVEVETINSFWKLELLKEVYGLISILPILTLLLGITIEVLVIVWLEREISASIQQRIGPEYAGPLGLLQAIADGTKLLFKEDILPSRGDISLFSIGPSIAVISVLLSFLVIPLGYHFVLADLSIGVFLWIAISSIAPIGLLMAGYSSNNKYSFLGGLRAAAQSISYEIPLTFCVLAISLLSNSLSTVDIVEAQSKYGFFGWNIWRQPIGFLVFLISSLAECERLPFDLPEAEEELVAGYQTEYSGIKYGLFYLVSYLNLLVSSLFVTVLYLGGWNLSIPYISFFDFFQMNKAVGILEMTMGIFITLTKAYLFLFISITIRWTLPRMRMDQLLNLGWKFLLPISLGNLLLTTSFQLVSL.

8 helical membrane-spanning segments follow: residues 29–49 (ILPILTLLLGITIEVLVIVWL), 103–123 (IAVISVLLSFLVIPLGYHFVL), 128–148 (IGVFLWIAISSIAPIGLLMAG), 164–184 (AAQSISYEIPLTFCVLAISLL), 202–222 (FFGWNIWRQPIGFLVFLISSL), 247–267 (YSGIKYGLFYLVSYLNLLVSS), 303–323 (TMGIFITLTKAYLFLFISITI), and 335–355 (LLNLGWKFLLPISLGNLLLTT).

It belongs to the complex I subunit 1 family. NDH is composed of at least 16 different subunits, 5 of which are encoded in the nucleus.

It localises to the plastid. The protein resides in the chloroplast thylakoid membrane. It carries out the reaction a plastoquinone + NADH + (n+1) H(+)(in) = a plastoquinol + NAD(+) + n H(+)(out). The enzyme catalyses a plastoquinone + NADPH + (n+1) H(+)(in) = a plastoquinol + NADP(+) + n H(+)(out). Its function is as follows. NDH shuttles electrons from NAD(P)H:plastoquinone, via FMN and iron-sulfur (Fe-S) centers, to quinones in the photosynthetic chain and possibly in a chloroplast respiratory chain. The immediate electron acceptor for the enzyme in this species is believed to be plastoquinone. Couples the redox reaction to proton translocation, and thus conserves the redox energy in a proton gradient. The polypeptide is NAD(P)H-quinone oxidoreductase subunit 1, chloroplastic (Triticum aestivum (Wheat)).